Reading from the N-terminus, the 347-residue chain is Spermidine/putrescine import ATP-binding protein PotA (347 aa).

An ABC transporter domain is found at 6 to 238 (LEIRNLSHYY…PKTKFVADFI (233 aa)). Residue 40–47 (GPSGCGKT) participates in ATP binding.

Belongs to the ABC transporter superfamily. Spermidine/putrescine importer (TC 3.A.1.11.1) family. The complex is composed of two ATP-binding proteins (PotA), two transmembrane proteins (PotB and PotC) and a solute-binding protein (PotD).

It localises to the cell inner membrane. The enzyme catalyses ATP + H2O + polyamine-[polyamine-binding protein]Side 1 = ADP + phosphate + polyamineSide 2 + [polyamine-binding protein]Side 1.. Functionally, part of the ABC transporter complex PotABCD involved in spermidine/putrescine import. Responsible for energy coupling to the transport system. The sequence is that of Spermidine/putrescine import ATP-binding protein PotA from Borrelia garinii subsp. bavariensis (strain ATCC BAA-2496 / DSM 23469 / PBi) (Borreliella bavariensis).